Here is a 172-residue protein sequence, read N- to C-terminus: Co-chaperone protein HscB homolog (172 aa).

Residues 2 to 74 (NYFELFGLVE…LRRAEYLLSL (73 aa)) form the J domain.

Belongs to the HscB family. Interacts with HscA and stimulates its ATPase activity.

Functionally, co-chaperone involved in the maturation of iron-sulfur cluster-containing proteins. Seems to help targeting proteins to be folded toward HscA. The chain is Co-chaperone protein HscB homolog from Aeromonas hydrophila subsp. hydrophila (strain ATCC 7966 / DSM 30187 / BCRC 13018 / CCUG 14551 / JCM 1027 / KCTC 2358 / NCIMB 9240 / NCTC 8049).